The sequence spans 214 residues: Dephospho-CoA kinase (214 aa).

In terms of domain architecture, DPCK spans 3–202; sequence KIGLTGGIGS…DRWLALAGAA (200 aa). 11-16 provides a ligand contact to ATP; the sequence is GSGKSR.

Belongs to the CoaE family.

It is found in the cytoplasm. The catalysed reaction is 3'-dephospho-CoA + ATP = ADP + CoA + H(+). It participates in cofactor biosynthesis; coenzyme A biosynthesis; CoA from (R)-pantothenate: step 5/5. In terms of biological role, catalyzes the phosphorylation of the 3'-hydroxyl group of dephosphocoenzyme A to form coenzyme A. The protein is Dephospho-CoA kinase of Bordetella bronchiseptica (strain ATCC BAA-588 / NCTC 13252 / RB50) (Alcaligenes bronchisepticus).